We begin with the raw amino-acid sequence, 145 residues long: Cell wall teichoic acid glycosylation protein GtcA (145 aa).

Transmembrane regions (helical) follow at residues 21 to 41 (IFMYLIMGGFTTIINIVTFWL), 45 to 65 (ILNWDYRIANTIAFIASVLFA), 91 to 111 (FFGFRCLTYIIDILVMILLIS), and 122 to 142 (IWTNIIVLVLNYVFSKWIIFK).

It belongs to the GtrA family.

It localises to the cell membrane. Functionally, involved in the decoration of cell wall teichoic acid with galactose and glucose. This Listeria monocytogenes protein is Cell wall teichoic acid glycosylation protein GtcA (gtcA).